We begin with the raw amino-acid sequence, 164 residues long: Ubiquitin-fold modifier-conjugating enzyme 1 (164 aa).

Residue Cys116 is the Glycyl thioester intermediate of the active site.

The protein belongs to the ubiquitin-conjugating enzyme family. UFC1 subfamily.

In terms of biological role, E2-like enzyme which forms an intermediate with UFM1 via a thioester linkage. The polypeptide is Ubiquitin-fold modifier-conjugating enzyme 1 (Drosophila ananassae (Fruit fly)).